Consider the following 534-residue polypeptide: MLSPVSRDASDALQGRKCLRPRSRRLPLPAAVRAHGPMAELTDSARGCVVFEDVFVYFSREEWELLDDAQRLLYHDVMLENFALLASLGIAFSRSRAVMKLERGEEPWVYDQVDMTSATEREAQRGLRPGCWHGVEDEEVSSEQSIFVAGVSEVRTLMAELESHPCDICGPILKDTLHLAKYHGGKARQKPYLCGACGKQFWFSTDFDQHQNQPNGGKLFPRKEGRDSVKSCRVHVPEKTLTCGKGRRDFSATSGLLQHQASLSSMKPHKSTKLVSGFLMGQRYHRCGECGKAFTRKDTLARHQRIHTGERPYECNECGKFFSQSYDLFKHQTVHTGERPYECSECGKFFRQISGLIEHRRVHTGERLYQCGKCGKFFSSKSNLIRHQEVHTGARPYVCSECGKEFSRKHTLVLHQRTHTGERPYECSECGKAFSQSSHLNVHWRIHSSDYECSRCGKAFSCISKLIQHQKVHSGEKPYECSKCGKAFTQRPNLIRHWKVHTGERPYVCSECGREFIRKQTLVLHQRVHAGEKL.

The KRAB domain maps to 49 to 120 (VVFEDVFVYF…DQVDMTSATE (72 aa)). A C2H2-type 1; degenerate zinc finger spans residues 192–214 (YLCGACGKQFWFSTDFDQHQNQP). C2H2-type zinc fingers lie at residues 285–307 (HRCG…QRIH), 313–335 (YECN…QTVH), 341–363 (YECS…RRVH), 369–391 (YQCG…QEVH), 397–419 (YVCS…QRTH), 425–447 (YECS…WRIH), 451–473 (YECS…QKVH), 479–501 (YECS…WKVH), and 507–529 (YVCS…QRVH).

It belongs to the krueppel C2H2-type zinc-finger protein family.

It localises to the nucleus. In terms of biological role, may be involved in transcriptional regulation. The chain is Zinc finger protein 671 (ZNF671) from Homo sapiens (Human).